A 275-amino-acid chain; its full sequence is Light-independent protochlorophyllide reductase iron-sulfur ATP-binding protein (275 aa).

ATP contacts are provided by residues 12-17 and lysine 41; that span reads GIGKST. Serine 16 contributes to the Mg(2+) binding site. Positions 97 and 131 each coordinate [4Fe-4S] cluster. 182-183 provides a ligand contact to ATP; the sequence is NR.

This sequence belongs to the NifH/BchL/ChlL family. Homodimer. Protochlorophyllide reductase is composed of three subunits; BchL, BchN and BchB. The cofactor is [4Fe-4S] cluster.

It carries out the reaction chlorophyllide a + oxidized 2[4Fe-4S]-[ferredoxin] + 2 ADP + 2 phosphate = protochlorophyllide a + reduced 2[4Fe-4S]-[ferredoxin] + 2 ATP + 2 H2O. It participates in porphyrin-containing compound metabolism; bacteriochlorophyll biosynthesis (light-independent). In terms of biological role, component of the dark-operative protochlorophyllide reductase (DPOR) that uses Mg-ATP and reduced ferredoxin to reduce ring D of protochlorophyllide (Pchlide) to form chlorophyllide a (Chlide). This reaction is light-independent. The L component serves as a unique electron donor to the NB-component of the complex, and binds Mg-ATP. In Prosthecochloris aestuarii (strain DSM 271 / SK 413), this protein is Light-independent protochlorophyllide reductase iron-sulfur ATP-binding protein.